The chain runs to 705 residues: MSRSDPDPGKNSEPSKSKMSLELRPTAPSDQGRLNEAFQDEDLEEQNAPGNSTVRSRVVQSGEQGRAKQDDRQITIEQEPLGPKEGTEEESEDERQKGFLERKYDTVCEFCRKHRVILQHTIWAVLLTGFLALVIAACALNFHRALPLFVITLVTIFFVVWDRLMAKYEQRIDDVLSPGKRLLERHWFWLKWVVWCSLILAVILWLALDTARLGQQQLISFGGLVMYIVLLFLFSKHPTRVYWRPVFWGIGLQFLLGLLILRTRPGFVAFDWMGKQVQTFLGYTDAGAQFVFGEKYTDHFFAFKILPIVVFFSTVMSMLYYLGLMQWIIRKVGWLMLVTMGSSPIESVVAAGNIFVGQTESPLLVQPYLPHVTKSELHTIMTAGFATIAGSVLGAYISFGVSSTHLLTASVMSAPAALAVAKLFWPETEKPKITLKNAMKMENGDSRNLLEAATQGASSSIPLVANIAANLIAFLALLSFVNSALSWFGSMFDYPQLSFELICSYIFMPFSFMMGVDWQDRFMVAKLIGYKTFFNEFVAYEHLSKFINLRKAAGPKFVNGVQQYMSIRSETIATYALCGFANFGSLGIVIGGLTSIAPSRKRDIASGAMRALIAGTIACFMTACIAGMLSDTPVAINCHHVLESSKVLSNTTEVASCCQGLFNSTVARGPNDVLPGGNFSLYTLKSCCNLLKPPTLNCGWIPNIP.

The segment covering 1 to 21 (MSRSDPDPGKNSEPSKSKMSL) has biased composition (basic and acidic residues). The segment at 1 to 96 (MSRSDPDPGK…TEEESEDERQ (96 aa)) is disordered. Residues 1-119 (MSRSDPDPGK…FCRKHRVILQ (119 aa)) lie on the Cytoplasmic side of the membrane. Polar residues predominate over residues 48-63 (APGNSTVRSRVVQSGE). A compositionally biased stretch (basic and acidic residues) spans 65 to 74 (GRAKQDDRQI). Residues 120 to 140 (HTIWAVLLTGFLALVIAACAL) form a helical membrane-spanning segment. The Extracellular segment spans residues 141–145 (NFHRA). The chain crosses the membrane as a helical span at residues 146–166 (LPLFVITLVTIFFVVWDRLMA). Over 167 to 190 (KYEQRIDDVLSPGKRLLERHWFWL) the chain is Cytoplasmic. The helical transmembrane segment at 191–211 (KWVVWCSLILAVILWLALDTA) threads the bilayer. Residues 212-214 (RLG) are Extracellular-facing. The helical transmembrane segment at 215-236 (QQQLISFGGLVMYIVLLFLFSK) threads the bilayer. The Cytoplasmic portion of the chain corresponds to 237-244 (HPTRVYWR). The helical transmembrane segment at 245–264 (PVFWGIGLQFLLGLLILRTR) threads the bilayer. The Extracellular segment spans residues 265 to 301 (PGFVAFDWMGKQVQTFLGYTDAGAQFVFGEKYTDHFF). A helical membrane pass occupies residues 302 to 322 (AFKILPIVVFFSTVMSMLYYL). At 323 to 346 (GLMQWIIRKVGWLMLVTMGSSPIE) the chain is on the cytoplasmic side. The segment at residues 347–365 (SVVAAGNIFVGQTESPLLV) is an intramembrane region (helical). Over 366 to 378 (QPYLPHVTKSELH) the chain is Cytoplasmic. Residues 379 to 401 (TIMTAGFATIAGSVLGAYISFGV) traverse the membrane as a helical segment. At 402 to 403 (SS) the chain is on the extracellular side. A helical membrane pass occupies residues 404-425 (THLLTASVMSAPAALAVAKLFW). Over 426 to 460 (PETEKPKITLKNAMKMENGDSRNLLEAATQGASSS) the chain is Cytoplasmic. Residues 461 to 486 (IPLVANIAANLIAFLALLSFVNSALS) form a helical membrane-spanning segment. The Extracellular segment spans residues 487 to 524 (WFGSMFDYPQLSFELICSYIFMPFSFMMGVDWQDRFMV). The helical intramembrane region spans 525 to 544 (AKLIGYKTFFNEFVAYEHLS). Residues 545–583 (KFINLRKAAGPKFVNGVQQYMSIRSETIATYALCGFANF) lie on the Extracellular side of the membrane. The chain crosses the membrane as a helical span at residues 584-594 (GSLGIVIGGLT). The Cytoplasmic segment spans residues 595 to 607 (SIAPSRKRDIASG). The helical transmembrane segment at 608–630 (AMRALIAGTIACFMTACIAGMLS) threads the bilayer. The Extracellular portion of the chain corresponds to 631–705 (DTPVAINCHH…LNCGWIPNIP (75 aa)).

This sequence belongs to the concentrative nucleoside transporter (CNT) (TC 2.A.41) family. In terms of assembly, homotrimer. In terms of tissue distribution, expressed in kidney; in the proximal tubule, glomerulus and cortical collecting duct.

The protein resides in the cell membrane. The enzyme catalyses thymidine(out) + 2 Na(+)(out) = thymidine(in) + 2 Na(+)(in). It catalyses the reaction cytidine(out) + 2 Na(+)(out) = cytidine(in) + 2 Na(+)(in). It carries out the reaction uridine(out) + 2 Na(+)(out) = uridine(in) + 2 Na(+)(in). The catalysed reaction is adenosine(out) + 2 Na(+)(out) = adenosine(in) + 2 Na(+)(in). The enzyme catalyses guanosine(out) + 2 Na(+)(out) = guanosine(in) + 2 Na(+)(in). It catalyses the reaction inosine(out) + 2 Na(+)(out) = inosine(in) + 2 Na(+)(in). Its function is as follows. Sodium-dependent, pyrimidine- and purine-selective. Involved in the homeostasis of endogenous nucleosides. Exhibits the transport characteristics of the nucleoside transport system cib or N3 subtype (N3/cib) (with marked transport of both thymidine and inosine). Employs a 2:1 sodium/nucleoside ratio. Also able to transport gemcitabine, 3'-azido-3'-deoxythymidine (AZT), ribavirin and 3-deazauridine. The chain is Solute carrier family 28 member 3 (Slc28a3) from Rattus norvegicus (Rat).